The primary structure comprises 387 residues: Peroxisomal membrane protein LPX1 (387 aa).

Residues 385-387 (QKL) form a peroxisomal targeting signal type 1 region.

The protein localises to the peroxisome matrix. Functionally, has acyl esterase, lipase and phospholipase A activity. This Saccharomyces cerevisiae (strain ATCC 204508 / S288c) (Baker's yeast) protein is Peroxisomal membrane protein LPX1 (LPX1).